Consider the following 118-residue polypeptide: Small ribosomal subunit protein mS37 (118 aa).

Residues 42–84 (EATCITEMSVMMACWKQNEFRDDACRKEIQGFLDCAARAQEAR) form the CHCH domain. 2 short sequence motifs (cx9C motif) span residues 45 to 55 (CITEMSVMMAC) and 66 to 76 (CRKEIQGFLDC). Intrachain disulfides connect Cys-45/Cys-76 and Cys-55/Cys-66.

Belongs to the mitochondrion-specific ribosomal protein mS37 family. Component of the mitochondrial small ribosomal subunit (mt-SSU). Mature mammalian 55S mitochondrial ribosomes consist of a small (28S) and a large (39S) subunit. The 28S small subunit contains a 12S ribosomal RNA (12S mt-rRNA) and 30 different proteins. The 39S large subunit contains a 16S rRNA (16S mt-rRNA), a copy of mitochondrial valine transfer RNA (mt-tRNA(Val)), which plays an integral structural role, and 52 different proteins.

The protein resides in the mitochondrion. The protein localises to the nucleus. The sequence is that of Small ribosomal subunit protein mS37 (CHCHD1) from Homo sapiens (Human).